The primary structure comprises 444 residues: Phosphoribosylamine--glycine ligase (444 aa).

The ATP-grasp domain occupies 109–324 (RNLFKKYEID…FLDVCFAIAE (216 aa)). Residue 140 to 202 (MTSLGKDVVV…EEKLVGVEFT (63 aa)) participates in ATP binding. 3 residues coordinate Mg(2+): glutamine 282, glutamate 294, and asparagine 296. Mn(2+) is bound by residues glutamine 282, glutamate 294, and asparagine 296.

This sequence belongs to the GARS family. It depends on Mg(2+) as a cofactor. Mn(2+) serves as cofactor.

The enzyme catalyses 5-phospho-beta-D-ribosylamine + glycine + ATP = N(1)-(5-phospho-beta-D-ribosyl)glycinamide + ADP + phosphate + H(+). The protein operates within purine metabolism; IMP biosynthesis via de novo pathway; N(1)-(5-phospho-D-ribosyl)glycinamide from 5-phospho-alpha-D-ribose 1-diphosphate: step 2/2. The sequence is that of Phosphoribosylamine--glycine ligase from Methanococcus maripaludis (strain DSM 14266 / JCM 13030 / NBRC 101832 / S2 / LL).